The chain runs to 500 residues: L-arabinose isomerase (500 aa).

4 residues coordinate Mn(2+): Glu-306, Glu-333, His-350, and His-450.

The protein belongs to the arabinose isomerase family. As to quaternary structure, homohexamer. The cofactor is Mn(2+).

The catalysed reaction is beta-L-arabinopyranose = L-ribulose. It functions in the pathway carbohydrate degradation; L-arabinose degradation via L-ribulose; D-xylulose 5-phosphate from L-arabinose (bacterial route): step 1/3. In terms of biological role, catalyzes the conversion of L-arabinose to L-ribulose. The chain is L-arabinose isomerase from Shigella boydii serotype 18 (strain CDC 3083-94 / BS512).